A 329-amino-acid chain; its full sequence is uncharacterized protein (329 aa).

Residues 27-185 (PRRASVAVII…IQIDSSRALK (159 aa)) enclose the Nudix hydrolase domain. 3 helical membrane-spanning segments follow: residues 123–143 (VITS…VFIL), 227–247 (PFLR…LSPS), and 303–323 (LTLL…FLII).

It is found in the membrane. This is an uncharacterized protein from Schizosaccharomyces pombe (strain 972 / ATCC 24843) (Fission yeast).